The chain runs to 214 residues: Ion-translocating oxidoreductase complex subunit G (214 aa).

Residues 13–33 (ALLLGLFALVGVGLVALVQQF) form a helical membrane-spanning segment. Thr-180 is subject to FMN phosphoryl threonine.

The protein belongs to the RnfG family. The complex is composed of six subunits: RnfA, RnfB, RnfC, RnfD, RnfE and RnfG. Requires FMN as cofactor.

The protein localises to the cell inner membrane. Part of a membrane-bound complex that couples electron transfer with translocation of ions across the membrane. The sequence is that of Ion-translocating oxidoreductase complex subunit G from Pseudomonas aeruginosa (strain UCBPP-PA14).